A 259-amino-acid polypeptide reads, in one-letter code: Probable ABC transporter permease protein RBE_1340 (259 aa).

The next 5 membrane-spanning stretches (helical) occupy residues 25–45 (IFSL…SLII), 49–69 (LFIG…SGAV), 148–168 (VIAA…IGVM), 195–215 (PIDV…ISII), and 237–257 (AVVN…ELFF).

Belongs to the MlaE permease family.

Its subcellular location is the cell inner membrane. Could be part of an ABC transporter complex. The sequence is that of Probable ABC transporter permease protein RBE_1340 from Rickettsia bellii (strain RML369-C).